The sequence spans 284 residues: Bifunctional protein FolD (284 aa).

NADP(+)-binding positions include 166 to 168 (GSS) and isoleucine 232.

Belongs to the tetrahydrofolate dehydrogenase/cyclohydrolase family. In terms of assembly, homodimer.

The catalysed reaction is (6R)-5,10-methylene-5,6,7,8-tetrahydrofolate + NADP(+) = (6R)-5,10-methenyltetrahydrofolate + NADPH. It catalyses the reaction (6R)-5,10-methenyltetrahydrofolate + H2O = (6R)-10-formyltetrahydrofolate + H(+). The protein operates within one-carbon metabolism; tetrahydrofolate interconversion. Its function is as follows. Catalyzes the oxidation of 5,10-methylenetetrahydrofolate to 5,10-methenyltetrahydrofolate and then the hydrolysis of 5,10-methenyltetrahydrofolate to 10-formyltetrahydrofolate. The protein is Bifunctional protein FolD of Buchnera aphidicola subsp. Cinara cedri (strain Cc).